Here is a 265-residue protein sequence, read N- to C-terminus: 3-methyl-2-oxobutanoate hydroxymethyltransferase (265 aa).

Positions 45 and 84 each coordinate Mg(2+). 3-methyl-2-oxobutanoate is bound by residues 45–46 (DS), aspartate 84, and lysine 112. Residue glutamate 114 participates in Mg(2+) binding. Glutamate 181 (proton acceptor) is an active-site residue.

The protein belongs to the PanB family. As to quaternary structure, homodecamer; pentamer of dimers. It depends on Mg(2+) as a cofactor.

It is found in the cytoplasm. The catalysed reaction is 3-methyl-2-oxobutanoate + (6R)-5,10-methylene-5,6,7,8-tetrahydrofolate + H2O = 2-dehydropantoate + (6S)-5,6,7,8-tetrahydrofolate. It participates in cofactor biosynthesis; (R)-pantothenate biosynthesis; (R)-pantoate from 3-methyl-2-oxobutanoate: step 1/2. In terms of biological role, catalyzes the reversible reaction in which hydroxymethyl group from 5,10-methylenetetrahydrofolate is transferred onto alpha-ketoisovalerate to form ketopantoate. The polypeptide is 3-methyl-2-oxobutanoate hydroxymethyltransferase (Yersinia pseudotuberculosis serotype O:1b (strain IP 31758)).